Reading from the N-terminus, the 245-residue chain is Tetraspanin-6 (245 aa).

Residues 1–19 (MASPSRRLQTKPVITCFKS) lie on the Cytoplasmic side of the membrane. A helical transmembrane segment spans residues 20-40 (VLLIYTFIFWITGVILLAVGI). The Extracellular portion of the chain corresponds to 41–59 (WGKVSLENYFSLLNEKATN). The chain crosses the membrane as a helical span at residues 60–80 (VPFVLIGTGTVIILLGTFGCF). At 81 to 93 (ATCRASAWMLKLY) the chain is on the cytoplasmic side. The chain crosses the membrane as a helical span at residues 94–114 (AMFLTLIFLVELVAAIIGFVF). The Extracellular segment spans residues 115–208 (RHEIKNSLKN…IMVMTIIESE (94 aa)). The N-linked (GlcNAc...) asparagine glycan is linked to Asn134. The helical transmembrane segment at 209–229 (MGVVAGISFGVACFQLIGIFL) threads the bilayer. The Cytoplasmic segment spans residues 230 to 245 (AYCLSRAITNNQYEIV).

Belongs to the tetraspanin (TM4SF) family.

The protein resides in the membrane. This Bos taurus (Bovine) protein is Tetraspanin-6 (TSPAN6).